We begin with the raw amino-acid sequence, 44 residues long: Cytochrome b559 subunit beta (44 aa).

Residues 19–35 (WLAIHGLAIPTVFFLGA) form a helical membrane-spanning segment. His23 contacts heme.

It belongs to the PsbE/PsbF family. Heterodimer of an alpha subunit and a beta subunit. PSII is composed of 1 copy each of membrane proteins PsbA, PsbB, PsbC, PsbD, PsbE, PsbF, PsbH, PsbI, PsbJ, PsbK, PsbL, PsbM, PsbT, PsbX, PsbY, PsbZ, Psb30/Ycf12, at least 3 peripheral proteins of the oxygen-evolving complex and a large number of cofactors. It forms dimeric complexes. Requires heme b as cofactor.

It is found in the plastid. It localises to the chloroplast thylakoid membrane. Its function is as follows. This b-type cytochrome is tightly associated with the reaction center of photosystem II (PSII). PSII is a light-driven water:plastoquinone oxidoreductase that uses light energy to abstract electrons from H(2)O, generating O(2) and a proton gradient subsequently used for ATP formation. It consists of a core antenna complex that captures photons, and an electron transfer chain that converts photonic excitation into a charge separation. The chain is Cytochrome b559 subunit beta from Porphyra purpurea (Red seaweed).